The sequence spans 600 residues: Methionine--tRNA ligase (600 aa).

The short motif at 11–21 (PYANGPRHIGH) is the 'HIGH' region element. Residues Cys-143, Cys-146, Cys-156, and Cys-159 each contribute to the Zn(2+) site. The short motif at 350–354 (QFSSS) is the 'KMSKS' region element. Ser-353 serves as a coordination point for ATP.

The protein belongs to the class-I aminoacyl-tRNA synthetase family. MetG type 1 subfamily. As to quaternary structure, monomer. Zn(2+) serves as cofactor.

It localises to the cytoplasm. The catalysed reaction is tRNA(Met) + L-methionine + ATP = L-methionyl-tRNA(Met) + AMP + diphosphate. In terms of biological role, is required not only for elongation of protein synthesis but also for the initiation of all mRNA translation through initiator tRNA(fMet) aminoacylation. In Kineococcus radiotolerans (strain ATCC BAA-149 / DSM 14245 / SRS30216), this protein is Methionine--tRNA ligase.